The sequence spans 291 residues: ATP synthase gamma chain (291 aa).

Belongs to the ATPase gamma chain family. In terms of assembly, F-type ATPases have 2 components, CF(1) - the catalytic core - and CF(0) - the membrane proton channel. CF(1) has five subunits: alpha(3), beta(3), gamma(1), delta(1), epsilon(1). CF(0) has three main subunits: a, b and c.

It localises to the cell inner membrane. Produces ATP from ADP in the presence of a proton gradient across the membrane. The gamma chain is believed to be important in regulating ATPase activity and the flow of protons through the CF(0) complex. This chain is ATP synthase gamma chain, found in Burkholderia thailandensis (strain ATCC 700388 / DSM 13276 / CCUG 48851 / CIP 106301 / E264).